Consider the following 109-residue polypeptide: Parvalbumin alpha (109 aa).

EF-hand domains are found at residues 38-73 (KTDA…FSAH) and 77-109 (LNDT…VAQA). Ca(2+) contacts are provided by Asp-51, Asp-53, Ser-55, Glu-62, Asp-90, Asp-92, Asp-94, Lys-96, and Glu-101.

It belongs to the parvalbumin family.

Functionally, in muscle, parvalbumin is thought to be involved in relaxation after contraction. It binds two calcium ions. The sequence is that of Parvalbumin alpha from Triakis semifasciata (Leopard shark).